The following is a 164-amino-acid chain: Small ribosomal subunit protein uS9 (164 aa).

It belongs to the universal ribosomal protein uS9 family.

The polypeptide is Small ribosomal subunit protein uS9 (Rickettsia bellii (strain OSU 85-389)).